The chain runs to 440 residues: Elongation factor 1-gamma (440 aa).

Position 2 is an N-acetylalanine (alanine 2). The GST N-terminal domain occupies 2-87 (AAGTLYTYPE…YVSNEELRGS (86 aa)). In terms of domain architecture, GST C-terminal spans 88–216 (TPEAAAQVVQ…VKLCEKMAQF (129 aa)). 2 positions are modified to N6-acetyllysine: lysine 147 and lysine 212. Over residues 221–257 (FAESQPKKDTPRKEKGSREEKLKPQAERKEGKEEKKA) the composition is skewed to basic and acidic residues. The disordered stretch occupies residues 221-267 (FAESQPKKDTPRKEKGSREEKLKPQAERKEGKEEKKAAAPAPEEELD). Lysine 256 is covalently cross-linked (Glycyl lysine isopeptide (Lys-Gly) (interchain with G-Cter in SUMO1)). In terms of domain architecture, EF-1-gamma C-terminal spans 279–440 (AKDPFAHLPK…KAFNQGKIFK (162 aa)). Lysine 288 participates in a covalent cross-link: Glycyl lysine isopeptide (Lys-Gly) (interchain with G-Cter in SUMO2). Lysine 404 bears the N6-acetyllysine mark. At lysine 437 the chain carries N6-acetyllysine; alternate. Position 437 is an N6-malonyllysine; alternate (lysine 437).

EF-1 is composed of four subunits: alpha, beta, delta, and gamma.

Functionally, probably plays a role in anchoring the complex to other cellular components. The chain is Elongation factor 1-gamma (EEF1G) from Bos taurus (Bovine).